We begin with the raw amino-acid sequence, 360 residues long: Photosystem II protein D1 2 (360 aa).

Transmembrane regions (helical) follow at residues 29–46, 118–133, and 142–156; these read YVGWFGVLMIPTLLTATI, HFLIGVFCYMGREWEL, and WICVAYSAPVAAATA. Position 118 (His-118) interacts with chlorophyll a. A pheophytin a-binding site is contributed by Tyr-126. Residues Asp-170 and Glu-189 each coordinate [CaMn4O5] cluster. The helical transmembrane segment at 197–218 threads the bilayer; that stretch reads FHMLGVAGVFGGSLFSAMHGSL. Residue His-198 participates in chlorophyll a binding. A quinone contacts are provided by residues His-215 and 264–265; that span reads SF. Fe cation is bound at residue His-215. A Fe cation-binding site is contributed by His-272. The helical transmembrane segment at 274–288 threads the bilayer; sequence FLAAWPVVGIWFTSL. The [CaMn4O5] cluster site is built by His-332, Glu-333, Asp-342, and Ala-344. Positions 345–360 are excised as a propeptide; the sequence is AGEATPVALTAPAING.

This sequence belongs to the reaction center PufL/M/PsbA/D family. PSII is composed of 1 copy each of membrane proteins PsbA, PsbB, PsbC, PsbD, PsbE, PsbF, PsbH, PsbI, PsbJ, PsbK, PsbL, PsbM, PsbT, PsbX, PsbY, PsbZ, Psb30/Ycf12, peripheral proteins PsbO, CyanoQ (PsbQ), PsbU, PsbV and a large number of cofactors. It forms dimeric complexes. The D1/D2 heterodimer binds P680, chlorophylls that are the primary electron donor of PSII, and subsequent electron acceptors. It shares a non-heme iron and each subunit binds pheophytin, quinone, additional chlorophylls, carotenoids and lipids. D1 provides most of the ligands for the Mn4-Ca-O5 cluster of the oxygen-evolving complex (OEC). There is also a Cl(-1) ion associated with D1 and D2, which is required for oxygen evolution. The PSII complex binds additional chlorophylls, carotenoids and specific lipids. is required as a cofactor. In terms of processing, tyr-161 forms a radical intermediate that is referred to as redox-active TyrZ, YZ or Y-Z. C-terminally processed by CtpA; processing is essential to allow assembly of the oxygen-evolving complex and thus photosynthetic growth.

The protein resides in the cellular thylakoid membrane. The catalysed reaction is 2 a plastoquinone + 4 hnu + 2 H2O = 2 a plastoquinol + O2. Its function is as follows. Photosystem II (PSII) is a light-driven water:plastoquinone oxidoreductase that uses light energy to abstract electrons from H(2)O, generating O(2) and a proton gradient subsequently used for ATP formation. It consists of a core antenna complex that captures photons, and an electron transfer chain that converts photonic excitation into a charge separation. The D1/D2 (PsbA/PsbD) reaction center heterodimer binds P680, the primary electron donor of PSII as well as several subsequent electron acceptors. This is Photosystem II protein D1 2 from Synechococcus elongatus (strain ATCC 33912 / PCC 7942 / FACHB-805) (Anacystis nidulans R2).